The chain runs to 116 residues: UPF0329 protein ECU05_1650 (116 aa).

The protein belongs to the UPF0329 family.

In Encephalitozoon cuniculi (strain GB-M1) (Microsporidian parasite), this protein is UPF0329 protein ECU05_1650.